Consider the following 251-residue polypeptide: MVEDSQETTHFGFQTVAKEQKADMVAHVFHSVASKYDVMNDLMSFGIHRLWKRFTIDCSGVRRGQTVLDLAGGTGDLTAKFSRMVGETGKVILADINDSMLKMGREKLRNIGVIGNVEYVQANAEALPFPDNTFDCITISFGLRNVTEKEKALRSMFRVLKPGGRLLVLEFSKPIIEPLSKAYDAYSFHILPRIGSMVANDADSYRYLAESIRMHPDQDTLKAMMQDAGFESVDYYNLTAGVVALHRGYKF.

Residues Thr74, Asp95, 123–124 (NA), and Ser140 each bind S-adenosyl-L-methionine.

This sequence belongs to the class I-like SAM-binding methyltransferase superfamily. MenG/UbiE family.

It catalyses the reaction a 2-demethylmenaquinol + S-adenosyl-L-methionine = a menaquinol + S-adenosyl-L-homocysteine + H(+). The enzyme catalyses a 2-methoxy-6-(all-trans-polyprenyl)benzene-1,4-diol + S-adenosyl-L-methionine = a 5-methoxy-2-methyl-3-(all-trans-polyprenyl)benzene-1,4-diol + S-adenosyl-L-homocysteine + H(+). It participates in quinol/quinone metabolism; menaquinone biosynthesis; menaquinol from 1,4-dihydroxy-2-naphthoate: step 2/2. The protein operates within cofactor biosynthesis; ubiquinone biosynthesis. Functionally, methyltransferase required for the conversion of demethylmenaquinol (DMKH2) to menaquinol (MKH2) and the conversion of 2-polyprenyl-6-methoxy-1,4-benzoquinol (DDMQH2) to 2-polyprenyl-3-methyl-6-methoxy-1,4-benzoquinol (DMQH2). The sequence is that of Ubiquinone/menaquinone biosynthesis C-methyltransferase UbiE from Salmonella paratyphi A (strain AKU_12601).